The chain runs to 309 residues: Homoserine O-succinyltransferase (309 aa).

Catalysis depends on C142, which acts as the Acyl-thioester intermediate. Substrate is bound by residues K163 and S192. The Proton acceptor role is filled by H235. Residue E237 is part of the active site. Position 249 (R249) interacts with substrate.

The protein belongs to the MetA family.

It localises to the cytoplasm. It catalyses the reaction L-homoserine + succinyl-CoA = O-succinyl-L-homoserine + CoA. Its pathway is amino-acid biosynthesis; L-methionine biosynthesis via de novo pathway; O-succinyl-L-homoserine from L-homoserine: step 1/1. In terms of biological role, transfers a succinyl group from succinyl-CoA to L-homoserine, forming succinyl-L-homoserine. The polypeptide is Homoserine O-succinyltransferase (Yersinia enterocolitica serotype O:8 / biotype 1B (strain NCTC 13174 / 8081)).